The sequence spans 387 residues: UPF0400 protein C337.03 (387 aa).

The CID domain maps to 1-133 (MALTPDTVSS…SLQERFNNAE (133 aa)). Residues 177–255 (KSYLEKQSDY…IISNLENKES (79 aa)) adopt a coiled-coil conformation. Positions 257–387 (TATSTLTDAG…SSAAGLYGDS (131 aa)) are disordered. The segment covering 283-297 (SPPSSSPNSDDAYSP) has biased composition (low complexity). Residues 298–323 (QVDSYSPSINSVPYTSNIVENPSEDN) are compositionally biased toward polar residues. Residues 353-365 (NEEESKELPEDSD) show a composition bias toward acidic residues. A compositionally biased stretch (low complexity) spans 370–379 (DSSPSSDDSS). S372 is subject to Phosphoserine.

The protein belongs to the UPF0400 (RTT103) family.

This chain is UPF0400 protein C337.03, found in Schizosaccharomyces pombe (strain 972 / ATCC 24843) (Fission yeast).